We begin with the raw amino-acid sequence, 188 residues long: Pro-FMRFamide-related neuropeptide VF (188 aa).

The N-terminal stretch at 1–26 (MEIISLKRFILLTVATSSFLTSNTFC) is a signal peptide. Positions 27-57 (TDEFMMPHFHSKEGDGKYSQLRGIPKGEKER) are excised as a propeptide. Position 94 is a phenylalanine amide (F94). Residues 97–106 (TIDEKRSPAA) constitute a propeptide that is removed on maturation. 2 disordered regions span residues 116–144 (SHFP…QKPL) and 163–188 (IQSP…KPEK). A Phenylalanine amide modification is found at F125. The propeptide occupies 128–188 (TTARSPKTPA…TDDAERKPEK (61 aa)).

This sequence belongs to the FARP (FMRFamide related peptide) family.

It localises to the secreted. Functionally, efficiently inhibits forskolin-induced production of cAMP. Acts as a potent negative regulator of gonadotropin synthesis and secretion. Induces secretion of prolactin. In terms of biological role, efficiently inhibits forskolin-induced production of cAMP. Blocks morphine-induced analgesia. In Mus musculus (Mouse), this protein is Pro-FMRFamide-related neuropeptide VF (Npvf).